We begin with the raw amino-acid sequence, 414 residues long: Bystin (414 aa).

Positions 1-11 are enriched in basic residues; sequence MSAKRNTKLRH. The tract at residues 1-91 is disordered; that stretch reads MSAKRNTKLR…PSDDEGQADD (91 aa). Over residues 12–24 the composition is skewed to basic and acidic residues; that stretch reads APLEHAYVDDKSV. Residues 25 to 34 are compositionally biased toward basic residues; the sequence is RRNKRSKQRG.

The protein belongs to the bystin family.

It is found in the nucleus. Its subcellular location is the nucleolus. Functionally, required for processing of 20S pre-rRNA precursor and biogenesis of 40S ribosomal subunits. This Monosiga brevicollis (Choanoflagellate) protein is Bystin (bysl).